We begin with the raw amino-acid sequence, 513 residues long: MAMAAAASPSKILIPPHRASAVTAAASTSCDSLRLLCAPRGRPGPRGLVARPVPRRPFFFSPRAVSDSKSSQTCLDPDASTSVLGIILGGGAGTRLYPLTKKRAKPAVPLGANYRLIDIPVSNCLNSNISKIYVLTQFNSASLNRHLSRAYGSNIGGYKNEGFVEVLAAQQSPDNPDWFQGTADAVRQYLWLFEEHNVMEYLILAGDHLYRMDYEKFIQAHRETDADITVAALPMDEERATAFGLMKIDEEGRIIEFAEKPKGEQLKAMMVDTTILGLEDARAKEMPYIASMGIYVISKHVMLQLLREQFPGANDFGSEVIPGATSTGMRVQAYLYDGYWEDIGTIEAFYNANLGITKKPIPDFSFYDRSAPIYTQPRHLPPSKVLDADVTDSVIGEGCVIKNCKIHHSVVGLRSCISEGAIIEDTLLMGADYYETEADKKLLAEKGGIPIGIGKNSHIKRAIIDKNARIGDNVMIINVDNVQEAARETDGYFIKSGIVTVIKDALLPSGTVI.

Residues Met1–Ala64 constitute a chloroplast transit peptide.

It belongs to the bacterial/plant glucose-1-phosphate adenylyltransferase family. Heterotetramer. Leaves and starchy endosperm.

The protein localises to the plastid. It is found in the chloroplast. Its subcellular location is the amyloplast. It carries out the reaction alpha-D-glucose 1-phosphate + ATP + H(+) = ADP-alpha-D-glucose + diphosphate. Its pathway is glycan biosynthesis; starch biosynthesis. Activated by 3'phosphoglycerate, inhibited by orthophosphate. Allosteric regulation. In terms of biological role, this protein plays a role in synthesis of starch. It catalyzes the synthesis of the activated glycosyl donor, ADP-glucose from Glc-1-P and ATP. The protein is Glucose-1-phosphate adenylyltransferase small subunit, chloroplastic/amyloplastic of Hordeum vulgare (Barley).